The sequence spans 461 residues: Argininosuccinate lyase (461 aa).

It belongs to the lyase 1 family. Argininosuccinate lyase subfamily.

The protein resides in the cytoplasm. The enzyme catalyses 2-(N(omega)-L-arginino)succinate = fumarate + L-arginine. It functions in the pathway amino-acid biosynthesis; L-arginine biosynthesis; L-arginine from L-ornithine and carbamoyl phosphate: step 3/3. The protein is Argininosuccinate lyase of Laribacter hongkongensis (strain HLHK9).